We begin with the raw amino-acid sequence, 378 residues long: Erythronate-4-phosphate dehydrogenase (378 aa).

The substrate site is built by Ser-45 and Thr-66. Positions 146 and 175 each coordinate NAD(+). Arg-208 is an active-site residue. Asp-232 serves as a coordination point for NAD(+). Glu-237 is a catalytic residue. The active-site Proton donor is the His-254. Residue Gly-257 coordinates NAD(+). Residue Tyr-258 participates in substrate binding.

The protein belongs to the D-isomer specific 2-hydroxyacid dehydrogenase family. PdxB subfamily. Homodimer.

Its subcellular location is the cytoplasm. The enzyme catalyses 4-phospho-D-erythronate + NAD(+) = (R)-3-hydroxy-2-oxo-4-phosphooxybutanoate + NADH + H(+). It functions in the pathway cofactor biosynthesis; pyridoxine 5'-phosphate biosynthesis; pyridoxine 5'-phosphate from D-erythrose 4-phosphate: step 2/5. Catalyzes the oxidation of erythronate-4-phosphate to 3-hydroxy-2-oxo-4-phosphonooxybutanoate. The protein is Erythronate-4-phosphate dehydrogenase of Enterobacter sp. (strain 638).